A 262-amino-acid polypeptide reads, in one-letter code: Phosphonates import ATP-binding protein PhnC (262 aa).

The ABC transporter domain maps to 5–253; sequence IRVEKLAKTF…RFDHLYRSIN (249 aa). An ATP-binding site is contributed by 37–44; sequence GPSGSGKS.

This sequence belongs to the ABC transporter superfamily. Phosphonates importer (TC 3.A.1.9.1) family. As to quaternary structure, the complex is composed of two ATP-binding proteins (PhnC), two transmembrane proteins (PhnE) and a solute-binding protein (PhnD).

The protein resides in the cell inner membrane. It carries out the reaction phosphonate(out) + ATP + H2O = phosphonate(in) + ADP + phosphate + H(+). Functionally, part of the ABC transporter complex PhnCDE involved in phosphonates import. Responsible for energy coupling to the transport system. In Shigella flexneri serotype 5b (strain 8401), this protein is Phosphonates import ATP-binding protein PhnC.